A 484-amino-acid polypeptide reads, in one-letter code: Glutamate--tRNA ligase (484 aa).

The 'HIGH' region signature appears at 12 to 22 (PSPTGEPHVGT). Positions 253-257 (KLSKR) match the 'KMSKS' region motif. Position 256 (K256) interacts with ATP.

It belongs to the class-I aminoacyl-tRNA synthetase family. Glutamate--tRNA ligase type 1 subfamily. Monomer.

Its subcellular location is the cytoplasm. It catalyses the reaction tRNA(Glu) + L-glutamate + ATP = L-glutamyl-tRNA(Glu) + AMP + diphosphate. Catalyzes the attachment of glutamate to tRNA(Glu) in a two-step reaction: glutamate is first activated by ATP to form Glu-AMP and then transferred to the acceptor end of tRNA(Glu). This Rhizobium etli (strain CIAT 652) protein is Glutamate--tRNA ligase.